Consider the following 1343-residue polypeptide: Spermatogenesis-associated protein 31A6 (1343 aa).

A helical transmembrane segment spans residues 23 to 43 (PWVLDIFLTLVFALGFFFLLL). Disordered regions lie at residues 55–88 (PSPSPGKRKCPVGRRRRPRGRMKNHSLRAGRECP), 106–235 (GPHL…STLI), 624–654 (DESPGTSQAKGKPSPWQSSTSTGESSKEAQK), 895–951 (PRGI…REAV), 1080–1156 (VQEE…PPSV), and 1309–1331 (KAVSPVSPPQHWPKTSGASSHHH). A compositionally biased stretch (basic residues) spans 60–82 (GKRKCPVGRRRRPRGRMKNHSLR). The segment covering 165-178 (LASTPSPGPMTTSV) has biased composition (polar residues). Over residues 198–222 (PEPPALFPHPPHTPDPLACSPPPPK) the composition is skewed to pro residues. Composition is skewed to polar residues over residues 627–647 (PGTSQAKGKPSPWQSSTSTGE) and 923–944 (LTYSLTGSTQQSRSLGAQSSKA). Basic and acidic residues-rich tracts occupy residues 1104 to 1123 (HKSEKSRKPNLEKHEERLEG) and 1133 to 1142 (RKTEDTHQDE).

It belongs to the SPATA31 family.

It is found in the membrane. Its function is as follows. May play a role in spermatogenesis. This Homo sapiens (Human) protein is Spermatogenesis-associated protein 31A6 (SPATA31A6).